We begin with the raw amino-acid sequence, 217 residues long: Octanoyltransferase (217 aa).

The BPL/LPL catalytic domain maps to 32–207; it reads SDSPDELWIV…TLSQLLGYQQ (176 aa). Substrate-binding positions include 71–78, 138–140, and 151–153; these read RGGQVTYH, SLG, and GLA. Residue cysteine 169 is the Acyl-thioester intermediate of the active site.

This sequence belongs to the LipB family.

The protein resides in the cytoplasm. The catalysed reaction is octanoyl-[ACP] + L-lysyl-[protein] = N(6)-octanoyl-L-lysyl-[protein] + holo-[ACP] + H(+). It participates in protein modification; protein lipoylation via endogenous pathway; protein N(6)-(lipoyl)lysine from octanoyl-[acyl-carrier-protein]: step 1/2. Its function is as follows. Catalyzes the transfer of endogenously produced octanoic acid from octanoyl-acyl-carrier-protein onto the lipoyl domains of lipoate-dependent enzymes. Lipoyl-ACP can also act as a substrate although octanoyl-ACP is likely to be the physiological substrate. This Shewanella sp. (strain ANA-3) protein is Octanoyltransferase.